We begin with the raw amino-acid sequence, 656 residues long: Chaperone protein DnaK (656 aa).

T204 carries the phosphothreonine; by autocatalysis modification. A disordered region spans residues 607–656; it reads VYAKKGGAAGAPPGGEAEGEPQAQAGGKKEDVVDAEFEEVKDEKKKDEDK. The segment covering 620–632 has biased composition (low complexity); sequence GGEAEGEPQAQAG. Positions 647 to 656 are enriched in basic and acidic residues; that stretch reads KDEKKKDEDK.

This sequence belongs to the heat shock protein 70 family.

Its function is as follows. Acts as a chaperone. This chain is Chaperone protein DnaK, found in Coxiella burnetii (strain CbuK_Q154) (Coxiella burnetii (strain Q154)).